The following is a 273-amino-acid chain: 3-methyl-2-oxobutanoate hydroxymethyltransferase 1 (273 aa).

The Mg(2+) site is built by D49 and D88. 3-methyl-2-oxobutanoate contacts are provided by residues 49–50, D88, and K118; that span reads DS. E120 provides a ligand contact to Mg(2+). Residue E187 is the Proton acceptor of the active site.

Belongs to the PanB family. As to quaternary structure, homodecamer; pentamer of dimers. The cofactor is Mg(2+).

The protein resides in the cytoplasm. The enzyme catalyses 3-methyl-2-oxobutanoate + (6R)-5,10-methylene-5,6,7,8-tetrahydrofolate + H2O = 2-dehydropantoate + (6S)-5,6,7,8-tetrahydrofolate. The protein operates within cofactor biosynthesis; (R)-pantothenate biosynthesis; (R)-pantoate from 3-methyl-2-oxobutanoate: step 1/2. Its function is as follows. Catalyzes the reversible reaction in which hydroxymethyl group from 5,10-methylenetetrahydrofolate is transferred onto alpha-ketoisovalerate to form ketopantoate. This is 3-methyl-2-oxobutanoate hydroxymethyltransferase 1 from Pseudomonas aeruginosa (strain UCBPP-PA14).